A 187-amino-acid polypeptide reads, in one-letter code: Peptidoglycan-recognition protein 2 (187 aa).

Residues 1–19 (MKAFLVALVVAIELTLVFA) form the signal peptide. Disulfide bonds link cysteine 21–cysteine 144 and cysteine 58–cysteine 64. The region spanning 43 to 170 (KPLKYVIIHH…RTVRPTDSPG (128 aa)) is the N-acetylmuramoyl-L-alanine amidase domain.

The protein belongs to the N-acetylmuramoyl-L-alanine amidase 2 family. Localizes to plasma (at protein level).

It is found in the secreted. Functionally, peptidoglycan-recognition protein probably involved in innate immunity by binding to peptidoglycans (PGN) of bacteria and activating the prophenoloxidase (proPO) cascade immune response. Binds to 1,3-beta-D-glucan and PGN. The chain is Peptidoglycan-recognition protein 2 (PGRP-2) from Holotrichia diomphalia (Korean black chafer).